The following is a 197-amino-acid chain: Pyridoxal 5'-phosphate synthase subunit PdxT (197 aa).

50–52 serves as a coordination point for L-glutamine; the sequence is GES. Residue C82 is the Nucleophile of the active site. Residues R111 and 140–141 each bind L-glutamine; that span reads IR. Residues H176 and E178 each act as charge relay system in the active site.

The protein belongs to the glutaminase PdxT/SNO family. In terms of assembly, in the presence of PdxS, forms a dodecamer of heterodimers. Only shows activity in the heterodimer.

It carries out the reaction aldehydo-D-ribose 5-phosphate + D-glyceraldehyde 3-phosphate + L-glutamine = pyridoxal 5'-phosphate + L-glutamate + phosphate + 3 H2O + H(+). It catalyses the reaction L-glutamine + H2O = L-glutamate + NH4(+). It functions in the pathway cofactor biosynthesis; pyridoxal 5'-phosphate biosynthesis. Its function is as follows. Catalyzes the hydrolysis of glutamine to glutamate and ammonia as part of the biosynthesis of pyridoxal 5'-phosphate. The resulting ammonia molecule is channeled to the active site of PdxS. The chain is Pyridoxal 5'-phosphate synthase subunit PdxT from Streptomyces griseus subsp. griseus (strain JCM 4626 / CBS 651.72 / NBRC 13350 / KCC S-0626 / ISP 5235).